The chain runs to 526 residues: MSGNKVEVDKRRTFAIISHPDAGKTTITEKVLLFGNALQKAGTVKGKKSGQHAKSDWMEMEKDRGISITTSVMQFPYGGALVNLLDTPGHEDFSEDTYRTLTAVDSCLMVIDSAKGVEDRTIKLMEVTRLRDTPIVTFMNKLDRDIRDPIDLMDEVENVLNIACAPITWPIGSGKEFKGVYHILRDEVVLYQSGMGHTIQERRVIEGINNPDLDKAIGSYAADLRDEMELVRGASNEFDHAAFLKGELTPVFFGTALGNFGVDHILDGIVEWAPKPLPRESDTRVIMPDEEKFTGFVFKIQANMDPKHRDRVAFMRVCSGRYEQGMKMHHVRIGKDVNVSDALTFMAGDRERAEEAYPGDIIGLHNHGTIRIGDTFTQGEKFRFTGVPNFAPEMFRRIRLRDPLKQKQLLKGLVQLSEEGAVQVFRPLDTNDLIVGAVGVLQFEVVVGRLKSEYNVEAIYEGISVSTARWVYCKDERKLEEFRRKCSQNLALDGGDNLTYIAPTMVNLNLSMERYPDIEFAKTREH.

A tr-type G domain is found at 9–277 (DKRRTFAIIS…GIVEWAPKPL (269 aa)). GTP is bound by residues 18–25 (SHPDAGKT), 86–90 (DTPGH), and 140–143 (NKLD).

This sequence belongs to the TRAFAC class translation factor GTPase superfamily. Classic translation factor GTPase family. PrfC subfamily.

The protein localises to the cytoplasm. Functionally, increases the formation of ribosomal termination complexes and stimulates activities of RF-1 and RF-2. It binds guanine nucleotides and has strong preference for UGA stop codons. It may interact directly with the ribosome. The stimulation of RF-1 and RF-2 is significantly reduced by GTP and GDP, but not by GMP. In Shewanella putrefaciens (strain CN-32 / ATCC BAA-453), this protein is Peptide chain release factor 3.